Here is a 202-residue protein sequence, read N- to C-terminus: Peptidyl-tRNA hydrolase (202 aa).

Tyrosine 14 is a tRNA binding site. Histidine 19 (proton acceptor) is an active-site residue. TRNA contacts are provided by phenylalanine 64, asparagine 66, and asparagine 112.

This sequence belongs to the PTH family. As to quaternary structure, monomer.

Its subcellular location is the cytoplasm. The enzyme catalyses an N-acyl-L-alpha-aminoacyl-tRNA + H2O = an N-acyl-L-amino acid + a tRNA + H(+). Functionally, hydrolyzes ribosome-free peptidyl-tRNAs (with 1 or more amino acids incorporated), which drop off the ribosome during protein synthesis, or as a result of ribosome stalling. In terms of biological role, catalyzes the release of premature peptidyl moieties from peptidyl-tRNA molecules trapped in stalled 50S ribosomal subunits, and thus maintains levels of free tRNAs and 50S ribosomes. The sequence is that of Peptidyl-tRNA hydrolase from Methylobacterium radiotolerans (strain ATCC 27329 / DSM 1819 / JCM 2831 / NBRC 15690 / NCIMB 10815 / 0-1).